The sequence spans 944 residues: 2-oxoglutarate dehydrogenase E1 component (944 aa).

The segment at 914 to 944 (RRRRSSPAEGDPTVHKKEQERIVSDSLTRKN) is disordered. Over residues 925–936 (PTVHKKEQERIV) the composition is skewed to basic and acidic residues.

Belongs to the alpha-ketoglutarate dehydrogenase family. Homodimer. Part of the 2-oxoglutarate dehydrogenase (OGDH) complex composed of E1 (2-oxoglutarate dehydrogenase), E2 (dihydrolipoamide succinyltransferase) and E3 (dihydrolipoamide dehydrogenase); the complex contains multiple copies of the three enzymatic components (E1, E2 and E3). Thiamine diphosphate is required as a cofactor.

It catalyses the reaction N(6)-[(R)-lipoyl]-L-lysyl-[protein] + 2-oxoglutarate + H(+) = N(6)-[(R)-S(8)-succinyldihydrolipoyl]-L-lysyl-[protein] + CO2. In terms of biological role, E1 component of the 2-oxoglutarate dehydrogenase (OGDH) complex which catalyzes the decarboxylation of 2-oxoglutarate, the first step in the conversion of 2-oxoglutarate to succinyl-CoA and CO(2). The chain is 2-oxoglutarate dehydrogenase E1 component from Bacillus subtilis (strain 168).